A 156-amino-acid polypeptide reads, in one-letter code: Ribosome maturation factor RimP (156 aa).

Belongs to the RimP family.

The protein localises to the cytoplasm. In terms of biological role, required for maturation of 30S ribosomal subunits. The chain is Ribosome maturation factor RimP from Prochlorococcus marinus (strain NATL1A).